The sequence spans 187 residues: Protein GrpE (187 aa).

The protein belongs to the GrpE family. As to quaternary structure, homodimer.

The protein resides in the cytoplasm. Its function is as follows. Participates actively in the response to hyperosmotic and heat shock by preventing the aggregation of stress-denatured proteins, in association with DnaK and GrpE. It is the nucleotide exchange factor for DnaK and may function as a thermosensor. Unfolded proteins bind initially to DnaJ; upon interaction with the DnaJ-bound protein, DnaK hydrolyzes its bound ATP, resulting in the formation of a stable complex. GrpE releases ADP from DnaK; ATP binding to DnaK triggers the release of the substrate protein, thus completing the reaction cycle. Several rounds of ATP-dependent interactions between DnaJ, DnaK and GrpE are required for fully efficient folding. This is Protein GrpE from Albidiferax ferrireducens (strain ATCC BAA-621 / DSM 15236 / T118) (Rhodoferax ferrireducens).